A 315-amino-acid polypeptide reads, in one-letter code: Lipoyl synthase (315 aa).

[4Fe-4S] cluster contacts are provided by C62, C67, C73, C88, C92, C95, and S302. Residues 73–291 (CFGHGTATFM…GELAKKLGFS (219 aa)) enclose the Radical SAM core domain.

The protein belongs to the radical SAM superfamily. Lipoyl synthase family. [4Fe-4S] cluster serves as cofactor.

The protein localises to the cytoplasm. The enzyme catalyses [[Fe-S] cluster scaffold protein carrying a second [4Fe-4S](2+) cluster] + N(6)-octanoyl-L-lysyl-[protein] + 2 oxidized [2Fe-2S]-[ferredoxin] + 2 S-adenosyl-L-methionine + 4 H(+) = [[Fe-S] cluster scaffold protein] + N(6)-[(R)-dihydrolipoyl]-L-lysyl-[protein] + 4 Fe(3+) + 2 hydrogen sulfide + 2 5'-deoxyadenosine + 2 L-methionine + 2 reduced [2Fe-2S]-[ferredoxin]. It participates in protein modification; protein lipoylation via endogenous pathway; protein N(6)-(lipoyl)lysine from octanoyl-[acyl-carrier-protein]: step 2/2. Functionally, catalyzes the radical-mediated insertion of two sulfur atoms into the C-6 and C-8 positions of the octanoyl moiety bound to the lipoyl domains of lipoate-dependent enzymes, thereby converting the octanoylated domains into lipoylated derivatives. This is Lipoyl synthase from Coxiella burnetii (strain Dugway 5J108-111).